Consider the following 524-residue polypeptide: MATAAVAVREDSGSGMKAELAPRPGAEGREMTQEEKLQLRKEKKQQKKKRKEEKGTETETGSAVSAAQCQVGPAKHLAGPDSQLGTAKEKVPAGRSKAELRAERRAKQEAERAMKQARKGDQGGPPPQACPSTAGETPSGVKRLPEHSQVDDPTLLRRLVKKPERQQVPTRKDYGSKVSLFSHLPQYSRQNSLTQFMSIPSSVIHPAMVRLGLQYSQGLVSGSNARCIALLRALQQVIQDYTTPPSEELSRDLVNKLKPYFSFLTQCRPLSASMYNAIKLLNKEITGVSGSKREEEAKSELRAAIDRYIKEKIVLAAQAISRFAYKKISNGDVILVYGCSSLVSHILQEAWAKGRQFRVVVVDSRPRLEAKHTLRSLVRAGVPASYLLIPAASYVLPEVSKVLLGAHALLANGSVMSRVGTAQLALVARAHNVPVLVCCETYKFCERVQTDAFVSNELDDPDDLLCERGEHVALANWQNHSSLRLLNLVYDVTPPELVDLVITELGMIPCSSVPVVLRVKSSDQ.

Residues 1-173 form a disordered region; that stretch reads MATAAVAVRE…ERQQVPTRKD (173 aa). Alanine 2 bears the N-acetylalanine mark. The residue at position 12 (serine 12) is a Phosphoserine. Basic and acidic residues predominate over residues 26-40; that stretch reads AEGREMTQEEKLQLR. The segment covering 41 to 51 has biased composition (basic residues); sequence KEKKQQKKKRK. Phosphothreonine is present on threonine 86. 2 stretches are compositionally biased toward basic and acidic residues: residues 87 to 121 and 161 to 173; these read AKEK…RKGD and KKPE…TRKD. The tract at residues 171-180 is may bind the chemical integrated stress response (ISR) inhibitor ISRIB; that stretch reads RKDYGSKVSL.

The protein belongs to the eIF-2B alpha/beta/delta subunits family. As to quaternary structure, component of the translation initiation factor 2B (eIF2B) complex which is a heterodecamer of two sets of five different subunits: alpha, beta, gamma, delta and epsilon. Subunits alpha, beta and delta comprise a regulatory subcomplex and subunits epsilon and gamma comprise a catalytic subcomplex. Within the complex, the hexameric regulatory complex resides at the center, with the two heterodimeric catalytic subcomplexes bound on opposite sides.

The protein resides in the cytoplasm. Its subcellular location is the cytosol. With respect to regulation, activated by the chemical integrated stress response (ISR) inhibitor ISRIB which stimulates guanine nucleotide exchange factor activity for both phosphorylated and unphosphorylated eIF2. Acts as a component of the translation initiation factor 2B (eIF2B) complex, which catalyzes the exchange of GDP for GTP on eukaryotic initiation factor 2 (eIF2) gamma subunit. Its guanine nucleotide exchange factor activity is repressed when bound to eIF2 complex phosphorylated on the alpha subunit, thereby limiting the amount of methionyl-initiator methionine tRNA available to the ribosome and consequently global translation is repressed. In Bos taurus (Bovine), this protein is Translation initiation factor eIF2B subunit delta (EIF2B4).